We begin with the raw amino-acid sequence, 146 residues long: Hemoglobin subunit beta (146 aa).

At valine 1 the chain carries N-acetylvaline. Residues 2 to 146 (HLSADEKNAL…VANALAHKYH (145 aa)) enclose the Globin domain. At serine 44 the chain carries Phosphoserine. Position 59 is an N6-acetyllysine (lysine 59). Histidine 63 serves as a coordination point for heme b. Lysine 82 carries the N6-acetyllysine modification. Heme b is bound at residue histidine 92. Cysteine 93 bears the S-nitrosocysteine mark. Lysine 144 carries the post-translational modification N6-acetyllysine.

It belongs to the globin family. As to quaternary structure, heterotetramer of two alpha chains and two beta chains. As to expression, red blood cells.

Its function is as follows. Involved in oxygen transport from the lung to the various peripheral tissues. The chain is Hemoglobin subunit beta from Sciurus carolinensis (Eastern gray squirrel).